Here is a 355-residue protein sequence, read N- to C-terminus: Transcription factor TCP13 (355 aa).

Residues 1 to 57 (MNIVSWKDANDEVAGGATTRREREVKEDQEETEVRATSGKTVIKKQPTSISSSSSSW) are disordered. In terms of domain architecture, TCP spans 74 to 132 (GKDRHSKVCTLRGLRDRRVRLSVPTAIQLYDLQERLGVDQPSKAVDWLLDAAKEEIDEL). The segment at 329–355 (TNSTTTANMSRHLGSERCTSRGSDHHM) is disordered. Over residues 341–355 (LGSERCTSRGSDHHM) the composition is skewed to basic and acidic residues.

As to quaternary structure, interacts with AHL27 and AHL29. Interacts with SPL. Interacts with KIN10; KIN11 and FLZ3. Expressed in cotyledons, particularly in the vascular region, in leaves, buds, flowers and immature siliques, and, to a lower extent, in roots.

The protein resides in the nucleus. It is found in the plastid. Its subcellular location is the chloroplast. Functionally, plays a pivotal role in the control of morphogenesis of shoot organs by negatively regulating the expression of boundary-specific genes such as CUC genes, probably through the induction of miRNA (e.g. miR164). Binds to the 3'-ACC-5' repeats in the light-responsive promoter (LRP) of psbD, and activates its transcription. Participates in ovule development. The protein is Transcription factor TCP13 (TCP13) of Arabidopsis thaliana (Mouse-ear cress).